A 204-amino-acid chain; its full sequence is Large ribosomal subunit protein eL15 (204 aa).

This sequence belongs to the eukaryotic ribosomal protein eL15 family. In terms of assembly, component of the large ribosomal subunit.

Its subcellular location is the cytoplasm. In terms of biological role, component of the large ribosomal subunit. The ribosome is a large ribonucleoprotein complex responsible for the synthesis of proteins in the cell. This is Large ribosomal subunit protein eL15 (rpl15) from Silurus asotus (Amur catfish).